Here is a 554-residue protein sequence, read N- to C-terminus: Glucose-6-phosphate isomerase (554 aa).

The active-site Proton donor is glutamate 359. Catalysis depends on residues histidine 390 and lysine 518.

The protein belongs to the GPI family.

It localises to the cytoplasm. The enzyme catalyses alpha-D-glucose 6-phosphate = beta-D-fructose 6-phosphate. It functions in the pathway carbohydrate biosynthesis; gluconeogenesis. It participates in carbohydrate degradation; glycolysis; D-glyceraldehyde 3-phosphate and glycerone phosphate from D-glucose: step 2/4. Its function is as follows. Catalyzes the reversible isomerization of glucose-6-phosphate to fructose-6-phosphate. The sequence is that of Glucose-6-phosphate isomerase from Pseudomonas putida (strain ATCC 700007 / DSM 6899 / JCM 31910 / BCRC 17059 / LMG 24140 / F1).